Here is a 621-residue protein sequence, read N- to C-terminus: UvrABC system protein C (621 aa).

The GIY-YIG domain maps to 20–98; it reads MAPGVYCMYA…IKSLAPRYNV (79 aa). The UVR domain occupies 207-242; the sequence is DLLAEELIQAMQVASEHLEFEQAARLRDLLTSLRSM.

It belongs to the UvrC family. As to quaternary structure, interacts with UvrB in an incision complex.

The protein resides in the cytoplasm. Functionally, the UvrABC repair system catalyzes the recognition and processing of DNA lesions. UvrC both incises the 5' and 3' sides of the lesion. The N-terminal half is responsible for the 3' incision and the C-terminal half is responsible for the 5' incision. In Xylella fastidiosa (strain 9a5c), this protein is UvrABC system protein C.